The sequence spans 334 residues: Phosphoribosylformylglycinamidine cyclo-ligase (334 aa).

Belongs to the AIR synthase family.

It localises to the cytoplasm. The catalysed reaction is 2-formamido-N(1)-(5-O-phospho-beta-D-ribosyl)acetamidine + ATP = 5-amino-1-(5-phospho-beta-D-ribosyl)imidazole + ADP + phosphate + H(+). The protein operates within purine metabolism; IMP biosynthesis via de novo pathway; 5-amino-1-(5-phospho-D-ribosyl)imidazole from N(2)-formyl-N(1)-(5-phospho-D-ribosyl)glycinamide: step 2/2. The sequence is that of Phosphoribosylformylglycinamidine cyclo-ligase from Pyrococcus abyssi (strain GE5 / Orsay).